The primary structure comprises 103 residues: Large ribosomal subunit protein uL24 (103 aa).

Belongs to the universal ribosomal protein uL24 family. Part of the 50S ribosomal subunit.

Functionally, one of two assembly initiator proteins, it binds directly to the 5'-end of the 23S rRNA, where it nucleates assembly of the 50S subunit. Its function is as follows. One of the proteins that surrounds the polypeptide exit tunnel on the outside of the subunit. This Listeria monocytogenes serotype 4a (strain HCC23) protein is Large ribosomal subunit protein uL24.